The sequence spans 658 residues: PTS system 2-O-alpha-mannosyl-D-glycerate-specific EIIABC component (658 aa).

The Periplasmic segment spans residues 1–313; it reads MVLFYRAHWR…TELKQALLSG (313 aa). One can recognise a PTS EIIA type-2 domain in the interval 25–171; that stretch reads TLTHRDALCL…DELLSALDDK (147 aa). H87 serves as the catalytic Tele-phosphohistidine intermediate; for EIIA activity. H87 carries the post-translational modification Phosphohistidine; by HPr. One can recognise a PTS EIIB type-2 domain in the interval 186-282; the sequence is IVCVTACPAG…AEALIQQALT (97 aa). The active-site Phosphocysteine intermediate; for EIIB activity is C192. Position 192 is a phosphocysteine; by EIIA (C192). Residues 306-641 enclose the PTS EIIC type-2 domain; sequence LKQALLSGIS…AISTAILLMW (336 aa). The helical transmembrane segment at 314-334 threads the bilayer; sequence ISFAVPLIVAGGTVLAVAVLL. The Cytoplasmic segment spans residues 335–358; sequence SQIFGLQDLFNEENSWLWMYRKLG. Residues 359–379 traverse the membrane as a helical segment; the sequence is GGLLGILMVPVLAAYTAYSLA. The Periplasmic portion of the chain corresponds to 380-389; it reads DKPALAPGFA. A helical transmembrane segment spans residues 390 to 410; sequence AGLAANMIGSGFLGAVVGGLI. Residues 411–433 lie on the Cytoplasmic side of the membrane; the sequence is AGYLMRWVKNHLRLSSKFNGFLT. Residues 434–454 traverse the membrane as a helical segment; sequence FYLYPVLGTLGAGSLMLFVVG. Residues 455–474 are Periplasmic-facing; the sequence is EPVAWINNSLTAWLNGLSGS. The helical transmembrane segment at 475–495 threads the bilayer; that stretch reads NALLLGAILGFMCSFDLGGPV. The Cytoplasmic portion of the chain corresponds to 496 to 500; that stretch reads NKAAY. Residues 501 to 521 traverse the membrane as a helical segment; the sequence is AFCLGAMANGVYGPYAIFASV. Residues 522 to 551 lie on the Periplasmic side of the membrane; sequence KMVSAFTVTASTMLAPRLFKEFEIETGKST. The chain crosses the membrane as a helical span at residues 552 to 572; the sequence is WLLGLAGITEGAIPMAIEDPL. Position 573 (R573) is a topological domain, cytoplasmic. A helical transmembrane segment spans residues 574–594; the sequence is VIGSFVLGSMVTGAIVGAMNI. The Periplasmic portion of the chain corresponds to 595–620; the sequence is GLSTPGAGIFSLFLLHDNGAGGVMAA. Residues 621 to 641 traverse the membrane as a helical segment; the sequence is IGWFGAALVGAAISTAILLMW. At 642–658 the chain is on the cytoplasmic side; that stretch reads RRHAVKHGNYLTDGVMP.

The protein resides in the cell inner membrane. It carries out the reaction (2R)-2-O-(alpha-D-mannosyl)-glycerate(out) + N(pros)-phospho-L-histidyl-[protein] = (2R)-2-O-(6-phospho-alpha-D-mannosyl)-glycerate(in) + L-histidyl-[protein]. Functionally, the phosphoenolpyruvate-dependent sugar phosphotransferase system (sugar PTS), a major carbohydrate active transport system, catalyzes the phosphorylation of incoming sugar substrates concomitantly with their translocation across the cell membrane. This system is involved in mannosyl-D-glycerate transport. Also involved in thermoinduction of ompC. This is PTS system 2-O-alpha-mannosyl-D-glycerate-specific EIIABC component from Escherichia coli (strain K12).